The primary structure comprises 441 residues: MALALMCGRRQLLCLLRPQRQFHSVAGPCQWPRKPLTAGLGFPADRCLGHPRYVLLMAPGPRGLSTSAVSFGEAQVPAPPVIPATPPPTAVPEVASGEAADVIQAAAEQSFAELGLGSYTPVGLIQNLLEFMHVNLGLPWWGAIAACTVLARCLVFPLIVKGQREAAKIHNHLPEIQKFSARIREAKLTGNHTEFYRASSEMTFYQKKHDIKLFRPLILPLTQAPIFISFFIALREMANLPVPSLQTGGLWWFQDLTLSDPIYVLPLVVTATMWGVLELGAETGMQSSDLQWMRNFIRLMPLAVLPITIHFPTAVFMYWLSSNMFSLGQVACLRIPAVRTVLKIPQRVVHDPDKLAPREGFLKSFKQGWKNAEMAHQLQERERRMQNHLELAARGPLRQTFAHNPLLQHGKNDPPNTPNSSSSSSSSNKAKSKQPWRDTLG.

At 1–113 (MALALMCGRR…QAAAEQSFAE (113 aa)) the chain is on the mitochondrial intermembrane side. The helical transmembrane segment at 114-134 (LGLGSYTPVGLIQNLLEFMHV) threads the bilayer. At 135-139 (NLGLP) the chain is on the mitochondrial matrix side. Residues 140–160 (WWGAIAACTVLARCLVFPLIV) traverse the membrane as a helical segment. The Mitochondrial intermembrane portion of the chain corresponds to 161-212 (KGQREAAKIHNHLPEIQKFSARIREAKLTGNHTEFYRASSEMTFYQKKHDIK). Residues 213–233 (LFRPLILPLTQAPIFISFFIA) traverse the membrane as a helical segment. Residues 234–260 (LREMANLPVPSLQTGGLWWFQDLTLSD) lie on the Mitochondrial matrix side of the membrane. A helical membrane pass occupies residues 261-281 (PIYVLPLVVTATMWGVLELGA). Residues 282 to 298 (ETGMQSSDLQWMRNFIR) lie on the Mitochondrial intermembrane side of the membrane. A helical transmembrane segment spans residues 299–319 (LMPLAVLPITIHFPTAVFMYW). At 320–441 (LSSNMFSLGQ…SKQPWRDTLG (122 aa)) the chain is on the mitochondrial matrix side. Ser364 is modified (phosphoserine). Thr400 carries the phosphothreonine modification. A disordered region spans residues 405 to 441 (PLLQHGKNDPPNTPNSSSSSSSSNKAKSKQPWRDTLG). Residues 418–429 (PNSSSSSSSSNK) are compositionally biased toward low complexity.

It belongs to the OXA1/ALB3/YidC family. Monomer; predominantly monomeric at low salt concentrations. Homooligomer; predominantly homooligomeric at high salt concentrations. Associates with the mitochondrial ribosome. Associates preferentially as a dimer with the large ribosomal subunit 39S of the mitochondrial ribosome. Interacts with OXA1L; promoting cotranslational quality control in mitochondria.

The protein localises to the mitochondrion inner membrane. Its function is as follows. Mitochondrial membrane insertase that mediates the cotranslational insertion of integral membrane proteins into the mitochondrial inner membrane. Essential for the activity and assembly of cytochrome oxidase. Required for the correct biogenesis of ATP synthase and complex I in mitochondria. This is Mitochondrial inner membrane protein OXA1L (OXA1L) from Bos taurus (Bovine).